We begin with the raw amino-acid sequence, 480 residues long: Sulfate adenylyltransferase subunit 1 (480 aa).

In terms of domain architecture, tr-type G spans 30–248; the sequence is KGLLRFLTCG…TVDVKKEASK (219 aa). The tract at residues 39–46 is G1; it reads GSVDDGKS. A GTP-binding site is contributed by 39–46; that stretch reads GSVDDGKS. A G2 region spans residues 97–101; that stretch reads GITID. The tract at residues 118 to 121 is G3; the sequence is DTPG. GTP-binding positions include 118 to 122 and 173 to 176; these read DTPGH and NKMD. Residues 173–176 form a G4 region; sequence NKMD. The tract at residues 211–213 is G5; the sequence is SAL.

The protein belongs to the TRAFAC class translation factor GTPase superfamily. Classic translation factor GTPase family. CysN/NodQ subfamily. Heterodimer composed of CysD, the smaller subunit, and CysN.

The enzyme catalyses sulfate + ATP + H(+) = adenosine 5'-phosphosulfate + diphosphate. The protein operates within sulfur metabolism; hydrogen sulfide biosynthesis; sulfite from sulfate: step 1/3. In terms of biological role, with CysD forms the ATP sulfurylase (ATPS) that catalyzes the adenylation of sulfate producing adenosine 5'-phosphosulfate (APS) and diphosphate, the first enzymatic step in sulfur assimilation pathway. APS synthesis involves the formation of a high-energy phosphoric-sulfuric acid anhydride bond driven by GTP hydrolysis by CysN coupled to ATP hydrolysis by CysD. This Photorhabdus laumondii subsp. laumondii (strain DSM 15139 / CIP 105565 / TT01) (Photorhabdus luminescens subsp. laumondii) protein is Sulfate adenylyltransferase subunit 1.